The chain runs to 299 residues: Putative ammonium transporter 4 member 1 (299 aa).

A run of 5 helical transmembrane segments spans residues 16 to 36 (AWPLAAATLVGLQSVPRLVIL), 59 to 79 (VLLTLAGAGLLLWMGWTGFNG), 104 to 124 (LLVWLLLDSFVFGRLSVISAV), 158 to 178 (VLHTHGVAGSLSGVLTGLLLL), and 218 to 238 (AGIAFVVALNVAVTSAVCLAV).

This sequence belongs to the ammonia transporter channel (TC 1.A.11.2) family.

It is found in the membrane. The chain is Putative ammonium transporter 4 member 1 (AMT4-1) from Oryza sativa subsp. japonica (Rice).